The following is a 307-amino-acid chain: UDP-3-O-acyl-N-acetylglucosamine deacetylase (307 aa).

Zn(2+) contacts are provided by H78, H241, and D245. The active-site Proton donor is H268.

Belongs to the LpxC family. It depends on Zn(2+) as a cofactor.

The enzyme catalyses a UDP-3-O-[(3R)-3-hydroxyacyl]-N-acetyl-alpha-D-glucosamine + H2O = a UDP-3-O-[(3R)-3-hydroxyacyl]-alpha-D-glucosamine + acetate. It functions in the pathway glycolipid biosynthesis; lipid IV(A) biosynthesis; lipid IV(A) from (3R)-3-hydroxytetradecanoyl-[acyl-carrier-protein] and UDP-N-acetyl-alpha-D-glucosamine: step 2/6. Functionally, catalyzes the hydrolysis of UDP-3-O-myristoyl-N-acetylglucosamine to form UDP-3-O-myristoylglucosamine and acetate, the committed step in lipid A biosynthesis. The sequence is that of UDP-3-O-acyl-N-acetylglucosamine deacetylase from Bordetella bronchiseptica (strain ATCC BAA-588 / NCTC 13252 / RB50) (Alcaligenes bronchisepticus).